The following is a 162-amino-acid chain: Peptide methionine sulfoxide reductase MsrA (162 aa).

Residue C16 is part of the active site.

This sequence belongs to the MsrA Met sulfoxide reductase family.

It catalyses the reaction L-methionyl-[protein] + [thioredoxin]-disulfide + H2O = L-methionyl-(S)-S-oxide-[protein] + [thioredoxin]-dithiol. The enzyme catalyses [thioredoxin]-disulfide + L-methionine + H2O = L-methionine (S)-S-oxide + [thioredoxin]-dithiol. In terms of biological role, has an important function as a repair enzyme for proteins that have been inactivated by oxidation. Catalyzes the reversible oxidation-reduction of methionine sulfoxide in proteins to methionine. The protein is Peptide methionine sulfoxide reductase MsrA of Geobacter sulfurreducens (strain ATCC 51573 / DSM 12127 / PCA).